Consider the following 244-residue polypeptide: Venom nerve growth factor 3 (244 aa).

Residues 1–18 form the signal peptide; that stretch reads MSMLCYTLIIAFLIGIWA. Positions 19–125 are excised as a propeptide; it reads APKSEDNVPL…TLNRNIRAKR (107 aa). The segment covering 47–66 has biased composition (basic and acidic residues); that stretch reads GLKTSRNTDQRHPAPKKAED. Residues 47 to 67 form a disordered region; the sequence is GLKTSRNTDQRHPAPKKAEDQ. Intrachain disulfides connect cysteine 139/cysteine 205, cysteine 181/cysteine 233, and cysteine 193/cysteine 235.

It belongs to the NGF-beta family. Homodimer; non-covalently linked. In terms of tissue distribution, expressed by the venom gland.

The protein localises to the secreted. In terms of biological role, nerve growth factor is important for the development and maintenance of the sympathetic and sensory nervous systems. It stimulates division and differentiation of sympathetic and embryonic sensory neurons as well as basal forebrain cholinergic neurons in the brain. Its relevance in the snake venom is not clear. However, it has been shown to inhibit metalloproteinase-dependent proteolysis of platelet glycoprotein Ib alpha, suggesting a metalloproteinase inhibition to prevent metalloprotease autodigestion and/or protection against prey proteases. Binds a lipid between the two protein chains in the homodimer. The lipid-bound form promotes histamine relase from mouse mast cells, contrary to the lipid-free form. The chain is Venom nerve growth factor 3 from Notechis scutatus scutatus (Mainland tiger snake).